The following is a 169-amino-acid chain: ATP synthase subunit b (169 aa).

The chain crosses the membrane as a helical span at residues 3-23; the sequence is IKILLLVLPFFAFASEHGGVN.

Belongs to the ATPase B chain family. In terms of assembly, F-type ATPases have 2 components, F(1) - the catalytic core - and F(0) - the membrane proton channel. F(1) has five subunits: alpha(3), beta(3), gamma(1), delta(1), epsilon(1). F(0) has three main subunits: a(1), b(2) and c(10-14). The alpha and beta chains form an alternating ring which encloses part of the gamma chain. F(1) is attached to F(0) by a central stalk formed by the gamma and epsilon chains, while a peripheral stalk is formed by the delta and b chains.

The protein localises to the cell inner membrane. In terms of biological role, f(1)F(0) ATP synthase produces ATP from ADP in the presence of a proton or sodium gradient. F-type ATPases consist of two structural domains, F(1) containing the extramembraneous catalytic core and F(0) containing the membrane proton channel, linked together by a central stalk and a peripheral stalk. During catalysis, ATP synthesis in the catalytic domain of F(1) is coupled via a rotary mechanism of the central stalk subunits to proton translocation. Functionally, component of the F(0) channel, it forms part of the peripheral stalk, linking F(1) to F(0). This Campylobacter curvus (strain 525.92) protein is ATP synthase subunit b.